A 109-amino-acid polypeptide reads, in one-letter code: Small ribosomal subunit protein bS6 (109 aa).

This sequence belongs to the bacterial ribosomal protein bS6 family.

Its function is as follows. Binds together with bS18 to 16S ribosomal RNA. This is Small ribosomal subunit protein bS6 from Dehalococcoides mccartyi (strain CBDB1).